A 640-amino-acid polypeptide reads, in one-letter code: Threonine--tRNA ligase (640 aa).

In terms of domain architecture, TGS spans 1–61; sequence MPTITLPDGS…ENDASLQIIT (61 aa). The segment at 242–533 is catalytic; it reads DHRKIGKRLG…LIEHYEGAFP (292 aa). The Zn(2+) site is built by C333, H384, and H510.

The protein belongs to the class-II aminoacyl-tRNA synthetase family. Homodimer. It depends on Zn(2+) as a cofactor.

The protein resides in the cytoplasm. The enzyme catalyses tRNA(Thr) + L-threonine + ATP = L-threonyl-tRNA(Thr) + AMP + diphosphate + H(+). Functionally, catalyzes the attachment of threonine to tRNA(Thr) in a two-step reaction: L-threonine is first activated by ATP to form Thr-AMP and then transferred to the acceptor end of tRNA(Thr). Also edits incorrectly charged L-seryl-tRNA(Thr). In Pseudomonas syringae pv. tomato (strain ATCC BAA-871 / DC3000), this protein is Threonine--tRNA ligase.